Consider the following 753-residue polypeptide: Synaptotagmin-like protein 5 (753 aa).

In terms of domain architecture, RabBD spans 7 to 123 (FINLSFLLDH…IISGEWFLEE (117 aa)). The FYVE-type zinc-finger motif lies at 64–106 (CVHCQKSLGLIFDRGAPCQACSLRVCSECRVTGLDGSWKCTVC). 3 disordered regions span residues 145 to 188 (RRSP…GFLL), 221 to 283 (SFKS…GFEN), and 298 to 359 (TKSH…LNSL). Serine 147 carries the phosphoserine modification. Residues 224–238 (SVSGSDRGSTTSSDL) show a composition bias toward low complexity. 2 stretches are compositionally biased toward polar residues: residues 260–275 (TQRS…TSIS) and 305–316 (TSGTPSIAVSGT). 2 C2 domains span residues 429–550 (VTGE…DEWF) and 590–717 (PQGK…VDWM).

In terms of assembly, binds RAB27A that has been activated by GTP-binding.

It localises to the membrane. In terms of biological role, may act as Rab effector protein and play a role in vesicle trafficking. Binds phospholipids. In Rattus norvegicus (Rat), this protein is Synaptotagmin-like protein 5 (Sytl5).